Here is a 272-residue protein sequence, read N- to C-terminus: MMACHC-like protein (272 aa).

Residues aspartate 121, 132 to 135, and 146 to 148 each bind substrate; these read ILMQ and YYQ.

The protein belongs to the MMACHC family. It depends on FAD as a cofactor. The cofactor is FMN.

The protein localises to the cytoplasm. Functionally, catalyzes the reductive dealkylation of cyanocobalamin to cob(II)alamin, using FAD or FMN as cofactor and NADPH as cosubstrate. Can also catalyze the glutathione-dependent reductive demethylation of methylcobalamin, and, with much lower efficiency, the glutathione-dependent reductive demethylation of adenosylcobalamin. Under anaerobic conditions cob(I)alamin is the first product; it is highly reactive and is converted to aquocob(II)alamin in the presence of oxygen. Binds cyanocobalamin, adenosylcobalamin, methylcobalamin and other, related vitamin B12 derivatives. The protein is MMACHC-like protein (cblc-1) of Caenorhabditis elegans.